The primary structure comprises 469 residues: Neuraminidase (469 aa).

Residues 1-6 lie on the Intravirion side of the membrane; it reads MNPNQK. A helical transmembrane segment spans residues 7–29; it reads IITIGSVSLTIATICFLMQIAIQ. The interval 11–33 is involved in apical transport and lipid raft association; sequence GSVSLTIATICFLMQIAIQVTTV. The Virion surface segment spans residues 30–469; that stretch reads VTTVTLHFKQ…DGADINLMPI (440 aa). The tract at residues 36 to 88 is hypervariable stalk region; that stretch reads HFKQYECDSPANNQVMPCEPIIIERNITEIVYLTNTTIEKEICPKLVEYRNWS. 3 N-linked (GlcNAc...) asparagine; by host glycosylation sites follow: Asn-61, Asn-70, and Asn-86. The interval 91–469 is head of neuraminidase; it reads QCKITGFAPF…DGADINLMPI (379 aa). Cystine bridges form between Cys-92/Cys-417, Cys-124/Cys-129, Cys-183/Cys-230, Cys-232/Cys-237, Cys-278/Cys-291, Cys-280/Cys-289, Cys-318/Cys-337, and Cys-421/Cys-447. Arg-118 contributes to the substrate binding site. A glycan (N-linked (GlcNAc...) asparagine; by host) is linked at Asn-146. The active-site Proton donor/acceptor is Asp-151. Residue Arg-152 coordinates substrate. 2 N-linked (GlcNAc...) asparagine; by host glycosylation sites follow: Asn-200 and Asn-234. 276 to 277 provides a ligand contact to substrate; the sequence is EE. Arg-292 contributes to the substrate binding site. Positions 293, 297, and 324 each coordinate Ca(2+). Arg-371 is a binding site for substrate. A glycan (N-linked (GlcNAc...) asparagine; by host) is linked at Asn-402. The active-site Nucleophile is the Tyr-406.

The protein belongs to the glycosyl hydrolase 34 family. Homotetramer. It depends on Ca(2+) as a cofactor. N-glycosylated.

It is found in the virion membrane. The protein resides in the host apical cell membrane. It carries out the reaction Hydrolysis of alpha-(2-&gt;3)-, alpha-(2-&gt;6)-, alpha-(2-&gt;8)- glycosidic linkages of terminal sialic acid residues in oligosaccharides, glycoproteins, glycolipids, colominic acid and synthetic substrates.. Inhibited by the neuraminidase inhibitors zanamivir (Relenza) and oseltamivir (Tamiflu). These drugs interfere with the release of progeny virus from infected cells and are effective against all influenza strains. Resistance to neuraminidase inhibitors is quite rare. Functionally, catalyzes the removal of terminal sialic acid residues from viral and cellular glycoconjugates. Cleaves off the terminal sialic acids on the glycosylated HA during virus budding to facilitate virus release. Additionally helps virus spread through the circulation by further removing sialic acids from the cell surface. These cleavages prevent self-aggregation and ensure the efficient spread of the progeny virus from cell to cell. Otherwise, infection would be limited to one round of replication. Described as a receptor-destroying enzyme because it cleaves a terminal sialic acid from the cellular receptors. May facilitate viral invasion of the upper airways by cleaving the sialic acid moieties on the mucin of the airway epithelial cells. Likely to plays a role in the budding process through its association with lipid rafts during intracellular transport. May additionally display a raft-association independent effect on budding. Plays a role in the determination of host range restriction on replication and virulence. Sialidase activity in late endosome/lysosome traffic seems to enhance virus replication. This Aves (whales) protein is Neuraminidase.